The sequence spans 130 residues: Follitropin subunit beta (130 aa).

Positions 1-20 (MMKSIQLCILLWCLRAVCCH) are cleaved as a signal peptide. 6 cysteine pairs are disulfide-bonded: Cys-22–Cys-70, Cys-36–Cys-85, Cys-39–Cys-123, Cys-47–Cys-101, Cys-51–Cys-103, and Cys-106–Cys-113. 2 N-linked (GlcNAc...) asparagine glycosylation sites follow: Asn-26 and Asn-43.

The protein belongs to the glycoprotein hormones subunit beta family. Heterodimer. The active follitropin is a heterodimer composed of an alpha chain/CGA shared with other hormones and a unique beta chain/FSHB shown here.

It is found in the secreted. In terms of biological role, together with the alpha chain CGA constitutes follitropin, the follicle-stimulating hormone, and provides its biological specificity to the hormone heterodimer. Binds FSHR, a G protein-coupled receptor, on target cells to activate downstream signaling pathways. Follitropin is involved in follicle development and spermatogenesis in reproductive organs. The sequence is that of Follitropin subunit beta (Fshb) from Rattus norvegicus (Rat).